The following is a 66-amino-acid chain: Large ribosomal subunit protein bL33c (66 aa).

Belongs to the bacterial ribosomal protein bL33 family.

The protein localises to the plastid. It localises to the chloroplast. This chain is Large ribosomal subunit protein bL33c, found in Welwitschia mirabilis (Tree tumbo).